The chain runs to 457 residues: SH3 domain-binding protein 5 (457 aa).

Residues 1 to 12 (MDTALKRSRSEE) are compositionally biased toward basic and acidic residues. The disordered stretch occupies residues 1 to 68 (MDTALKRSRS…DDINRRETEL (68 aa)). The segment covering 25-43 (EKEEEEERMEQGLEEEEEV) has biased composition (acidic residues). The segment at 33–267 (MEQGLEEEEE…EIHERRRSNA (235 aa)) is sufficient for interaction with RAB11A and for guanine nucleotide exchange activity. Over residues 44-53 (DPRIQGELEK) the composition is skewed to basic and acidic residues. Coiled-coil stretches lie at residues 46-92 (RIQG…LAKK), 99-147 (DSKP…RLLE), 156-202 (AWQE…LEKK), and 213-257 (YFEL…RISD). The span at 308–319 (NCGNLVSEDDSE) shows a compositional bias: acidic residues. Residues 308–347 (NCGNLVSEDDSETQSVSSFSSGPTSPSEMPDQFPAVARPG) are disordered. The span at 322 to 334 (SVSSFSSGPTSPS) shows a compositional bias: low complexity. Ser353 is modified (phosphoserine; by MAPK12 and MAPK9). A disordered region spans residues 371 to 427 (SECSGASSPECEVERGDRAEGAENKMSDKANNNRVLSSTSAGGGRSRSQSSTSLEGQ). Phosphoserine is present on residues Ser377 and Ser378. Over residues 382–398 (EVERGDRAEGAENKMSD) the composition is skewed to basic and acidic residues. The span at 406 to 427 (LSSTSAGGGRSRSQSSTSLEGQ) shows a compositional bias: low complexity. Ser420 is modified (phosphoserine). Ser423 bears the Phosphoserine; by MAPK12 mark.

It belongs to the SH3BP5 family. In terms of assembly, interacts with BTK. Interacts with all isoforms of MAPK8, MAPK9, MAPK10 and MAPK12. Interacts with GDP-bound and nucleotide-free forms of RAB11A.

The protein localises to the cytoplasmic vesicle membrane. It is found in the mitochondrion. In terms of biological role, functions as a guanine nucleotide exchange factor (GEF) with specificity for RAB11A and RAB25. Inhibits the auto- and transphosphorylation activity of BTK. Plays a negative regulatory role in BTK-related cytoplasmic signaling in B-cells. May be involved in BCR-induced apoptotic cell death. This chain is SH3 domain-binding protein 5 (Sh3bp5), found in Rattus norvegicus (Rat).